Here is a 422-residue protein sequence, read N- to C-terminus: 3-phosphoshikimate 1-carboxyvinyltransferase (422 aa).

3-phosphoshikimate is bound by residues K24, S25, and R29. K24 contacts phosphoenolpyruvate. 2 residues coordinate phosphoenolpyruvate: G93 and R121. 3-phosphoshikimate contacts are provided by S164, S165, Q166, E308, and H335. Q166 is a phosphoenolpyruvate binding site. The active-site Proton acceptor is E308. Positions 339, 380, and 405 each coordinate phosphoenolpyruvate.

Belongs to the EPSP synthase family. Monomer.

It is found in the cytoplasm. The enzyme catalyses 3-phosphoshikimate + phosphoenolpyruvate = 5-O-(1-carboxyvinyl)-3-phosphoshikimate + phosphate. It functions in the pathway metabolic intermediate biosynthesis; chorismate biosynthesis; chorismate from D-erythrose 4-phosphate and phosphoenolpyruvate: step 6/7. In terms of biological role, catalyzes the transfer of the enolpyruvyl moiety of phosphoenolpyruvate (PEP) to the 5-hydroxyl of shikimate-3-phosphate (S3P) to produce enolpyruvyl shikimate-3-phosphate and inorganic phosphate. The sequence is that of 3-phosphoshikimate 1-carboxyvinyltransferase from Saccharopolyspora erythraea (strain ATCC 11635 / DSM 40517 / JCM 4748 / NBRC 13426 / NCIMB 8594 / NRRL 2338).